Reading from the N-terminus, the 430-residue chain is DNA damage-inducible protein DIN7 (430 aa).

The interval 1–96 (MGIPGLLPQL…HTETRRRKKR (96 aa)) is N-domain. The Mg(2+) site is built by Asp-30, Asp-78, Glu-150, Asp-152, Asp-171, Asp-173, and Asp-227. The interval 114–247 (NAMEYFQKSV…VTAMKIVKRY (134 aa)) is I-domain.

This sequence belongs to the XPG/RAD2 endonuclease family. Mg(2+) serves as cofactor.

The protein localises to the nucleus. Functionally, 5'-&gt;3' double-stranded DNA exonuclease. This chain is DNA damage-inducible protein DIN7 (DIN7), found in Saccharomyces cerevisiae (strain ATCC 204508 / S288c) (Baker's yeast).